The primary structure comprises 491 residues: [Pyruvate dehydrogenase (acetyl-transferring)] kinase 2, mitochondrial (491 aa).

The Histidine kinase domain occupies 153-480 (PTIRTLEDAS…DVVLKLGNLM (328 aa)). ATP-binding positions include 300–307 (EILRNTYE), aspartate 341, 359–360 (SK), and 383–446 (DEVH…GIGL).

This sequence belongs to the PDK/BCKDK protein kinase family. Interacts with PKP1.

It is found in the mitochondrion matrix. It catalyses the reaction L-seryl-[pyruvate dehydrogenase E1 alpha subunit] + ATP = O-phospho-L-seryl-[pyruvate dehydrogenase E1 alpha subunit] + ADP + H(+). Functionally, inhibits the mitochondrial pyruvate dehydrogenase complex by phosphorylation of the E1 alpha subunit (PDA1), thus contributing to the regulation of glucose metabolism. The protein is [Pyruvate dehydrogenase (acetyl-transferring)] kinase 2, mitochondrial of Saccharomyces cerevisiae (strain ATCC 204508 / S288c) (Baker's yeast).